The primary structure comprises 251 residues: Triosephosphate isomerase (251 aa).

9–11 (NWK) contributes to the substrate binding site. Catalysis depends on histidine 95, which acts as the Electrophile. Glutamate 167 functions as the Proton acceptor in the catalytic mechanism. Residues glycine 173, serine 213, and 234–235 (GG) contribute to the substrate site.

Belongs to the triosephosphate isomerase family. In terms of assembly, homodimer.

The protein resides in the cytoplasm. The enzyme catalyses D-glyceraldehyde 3-phosphate = dihydroxyacetone phosphate. It participates in carbohydrate biosynthesis; gluconeogenesis. It functions in the pathway carbohydrate degradation; glycolysis; D-glyceraldehyde 3-phosphate from glycerone phosphate: step 1/1. Involved in the gluconeogenesis. Catalyzes stereospecifically the conversion of dihydroxyacetone phosphate (DHAP) to D-glyceraldehyde-3-phosphate (G3P). The protein is Triosephosphate isomerase of Pelobacter propionicus (strain DSM 2379 / NBRC 103807 / OttBd1).